Here is a 416-residue protein sequence, read N- to C-terminus: Neurotensin receptor type 2 (416 aa).

Over 1 to 32 (METSSLWPPRPSPSAGLSLEARLGVDTRLWAK) the chain is Extracellular. Residues 33–55 (VLFTALYSLIFALGTAGNALSVH) form a helical membrane-spanning segment. Topologically, residues 56-64 (VVLKARAGR) are cytoplasmic. The chain crosses the membrane as a helical span at residues 65–87 (PGRLRYHVLSLALSALLLLLISV). Residues 88–109 (PMELYNFVWSHYPWVFGDLGCR) lie on the Extracellular side of the membrane. The cysteines at positions 108 and 194 are disulfide-linked. A helical membrane pass occupies residues 110–131 (GYYFVRELCAYATVLSVASLSA). Over 132 to 154 (ERCLAVCQPLRARRLLTPRRTRR) the chain is Cytoplasmic. The helical transmembrane segment at 155-176 (LLSLVWVASLGLALPMAVIMGQ) threads the bilayer. At 177 to 217 (KHEMERADGEPEPASRVCTVLVSRATLQVFIQVNVLVSFVL) the chain is on the extracellular side. A helical transmembrane segment spans residues 218 to 237 (PLALTAFLNGITVNHLVALY). Over 238 to 297 (SQVPSASAQVNSIPSRLELLSEEGLLGFITWRKTLSLGVQASLVRHKDASQIRSLQHSAQ) the chain is Cytoplasmic. The helical transmembrane segment at 298-318 (VLRAIVAVYVICWLPYHARRL) threads the bilayer. Over 319-337 (MYCYIPDDGWTDELYDFYH) the chain is Extracellular. The chain crosses the membrane as a helical span at residues 338–358 (YFYMVTNTLFYVSSAVTPVLY). The Cytoplasmic segment spans residues 359-416 (NAVSSSFRKLFLESLSSLCGEQRSVVPLPQEAPESTTSTYSFRLWGSPRNPSLGEIQV). The S-palmitoyl cysteine moiety is linked to residue cysteine 377. The residue at position 410 (serine 410) is a Phosphoserine.

Belongs to the G-protein coupled receptor 1 family. Neurotensin receptor subfamily. NTSR2 sub-subfamily. In terms of tissue distribution, expressed maximally in the cerebellum, hippocampus, piriform cortex and neocortex of adult brain.

The protein resides in the cell membrane. In terms of biological role, receptor for the tridecapeptide neurotensin. It is associated with G proteins that activate a phosphatidylinositol-calcium second messenger system. This is Neurotensin receptor type 2 (Ntsr2) from Mus musculus (Mouse).